A 324-amino-acid chain; its full sequence is Heat-inducible transcription repressor HrcA (324 aa).

It belongs to the HrcA family.

Its function is as follows. Negative regulator of class I heat shock genes (grpE-dnaK-dnaJ and groELS operons). Prevents heat-shock induction of these operons. The chain is Heat-inducible transcription repressor HrcA from Synechococcus sp. (strain CC9902).